Consider the following 640-residue polypeptide: Chaperone protein DnaK (640 aa).

Thr196 is subject to Phosphothreonine; by autocatalysis. The span at 547–569 shows a compositional bias: basic and acidic residues; it reads GDKIPSDKRPALEGALEKLKDAT. 2 disordered regions span residues 547–575 and 595–640; these read GDKI…GTTE and LYQA…GNGK. The segment covering 603-615 has biased composition (polar residues); the sequence is TNASEPTQNTDGS. Residues 625–634 show a composition bias toward acidic residues; sequence GEVENAEFEV.

The protein belongs to the heat shock protein 70 family.

In terms of biological role, acts as a chaperone. This Chlorobium phaeobacteroides (strain DSM 266 / SMG 266 / 2430) protein is Chaperone protein DnaK.